Reading from the N-terminus, the 306-residue chain is Beta-lactamase 1 (306 aa).

The first 43 residues, 1 to 43, serve as a signal peptide directing secretion; that stretch reads MKNKKMLKIGMCVGILGLSITSLVTFTGGALQVEAKEKTGQVK. Residue Ser89 is the Acyl-ester intermediate of the active site. Glu185 acts as the Proton acceptor in catalysis. Position 251–253 (251–253) interacts with substrate; it reads KSG.

Belongs to the class-A beta-lactamase family.

The protein localises to the secreted. The enzyme catalyses a beta-lactam + H2O = a substituted beta-amino acid. Acts preferentially on penicillins. This Bacillus cereus protein is Beta-lactamase 1 (penPC).